We begin with the raw amino-acid sequence, 525 residues long: Mitochondrial-processing peptidase subunit alpha (525 aa).

A mitochondrion-targeting transit peptide spans 1-33 (MAAVVLAATRLLRGSGSWGCSRLRFGPPAYRRF). Lys-64 carries the N6-succinyllysine modification. Lys-299 carries the N6-acetyllysine modification.

The protein belongs to the peptidase M16 family. As to quaternary structure, heterodimer of PMPCA (alpha) and PMPCB (beta) subunits, forming the mitochondrial processing protease (MPP) in which PMPCA is involved in substrate recognition and binding and PMPCB is the catalytic subunit.

The protein resides in the mitochondrion matrix. It localises to the mitochondrion inner membrane. In terms of biological role, substrate recognition and binding subunit of the essential mitochondrial processing protease (MPP), which cleaves the mitochondrial sequence off newly imported precursors proteins. This chain is Mitochondrial-processing peptidase subunit alpha (PMPCA), found in Pongo abelii (Sumatran orangutan).